The chain runs to 139 residues: Small ribosomal subunit protein bS6 (139 aa).

Residues 95–121 are compositionally biased toward basic and acidic residues; sequence AVTEQSEMLKAEESRNERRERRERPND. The interval 95–139 is disordered; it reads AVTEQSEMLKAEESRNERRERRERPNDNAEGADGDDNSDSDNADE. The segment covering 124-139 has biased composition (acidic residues); it reads EGADGDDNSDSDNADE.

It belongs to the bacterial ribosomal protein bS6 family.

Its function is as follows. Binds together with bS18 to 16S ribosomal RNA. The sequence is that of Small ribosomal subunit protein bS6 from Pseudomonas aeruginosa (strain LESB58).